Here is a 514-residue protein sequence, read N- to C-terminus: Cobyric acid synthase (514 aa).

The region spanning 249–448 is the GATase cobBQ-type domain; the sequence is LIDIAVIKLP…VHGVFDNDEI (200 aa). C330 serves as the catalytic Nucleophile. The active site involves H440.

Belongs to the CobB/CobQ family. CobQ subfamily.

It participates in cofactor biosynthesis; adenosylcobalamin biosynthesis. In terms of biological role, catalyzes amidations at positions B, D, E, and G on adenosylcobyrinic A,C-diamide. NH(2) groups are provided by glutamine, and one molecule of ATP is hydrogenolyzed for each amidation. The sequence is that of Cobyric acid synthase from Ruminiclostridium cellulolyticum (strain ATCC 35319 / DSM 5812 / JCM 6584 / H10) (Clostridium cellulolyticum).